A 1195-amino-acid chain; its full sequence is Zinc finger and BTB domain-containing protein 38 (1195 aa).

In terms of domain architecture, BTB spans 33-100 (CDVTIIVEDT…IYSSTVVVKR (68 aa)). A Glycyl lysine isopeptide (Lys-Gly) (interchain with G-Cter in SUMO2) cross-link involves residue Lys43. Residue Ser130 is modified to Phosphoserine. Residues Lys145, Lys148, Lys151, and Lys259 each participate in a glycyl lysine isopeptide (Lys-Gly) (interchain with G-Cter in SUMO2) cross-link. The interval 264 to 334 (RKPKTFSIPQ…QSSDVPGPPA (71 aa)) is disordered. The segment covering 270–280 (SIPQDSDSATE) has biased composition (polar residues). The interaction with CBFA2T3 stretch occupies residues 300-523 (PAAVLTRSKS…RRYQCIFCLE (224 aa)). Phosphoserine is present on Ser309. Basic and acidic residues predominate over residues 314 to 323 (GDVHFSREDE). The segment at 342–364 (YNCSCCSKAFDSSTLLSAHMQLH) adopts a C2H2-type 1 zinc-finger fold. The C2H2-type 2; degenerate zinc finger occupies 371–395 (LVCKYCNKQFTTLNRLDRHEQICMR). C2H2-type zinc fingers lie at residues 460 to 482 (YSCV…ANVH), 488 to 510 (YPCH…EIWH), and 516 to 539 (YQCI…KSFH). Glycyl lysine isopeptide (Lys-Gly) (interchain with G-Cter in SUMO2) cross-links involve residues Lys550, Lys557, Lys754, Lys758, Lys763, Lys804, Lys814, Lys821, Lys842, Lys850, and Lys857. Residues 745–804 (SDPAVSQSLKDDSKPEPDKVGRFASRPKSIKEKKKTTSHTRGEIPEESNYVADPGGSLSK) form a disordered region. Residues 753–765 (LKDDSKPEPDKVG) are compositionally biased toward basic and acidic residues. Disordered stretches follow at residues 871 to 891 (QEEP…PLGL) and 903 to 922 (FDDA…YYNY). Glycyl lysine isopeptide (Lys-Gly) (interchain with G-Cter in SUMO2) cross-links involve residues Lys923, Lys964, Lys969, Lys977, Lys981, Lys991, Lys1017, and Lys1026. C2H2-type zinc fingers lie at residues 1010 to 1032 (YACE…MRCH), 1038 to 1060 (YQCK…ERIH), 1066 to 1088 (FVCQ…ERIH), 1094 to 1116 (YHCQ…EQRH), and 1125 to 1147 (YACF…QKKH). Residues Lys1109, Lys1132, Lys1135, Lys1150, and Lys1183 each participate in a glycyl lysine isopeptide (Lys-Gly) (interchain with G-Cter in SUMO2) cross-link.

As to quaternary structure, interacts with CBFA2T3. Interacts with ZBTB4. Interacts with RBBP6. Ubiquitinated by RBBP6; leading to its degradation by the proteasome.

It localises to the nucleus. It is found in the chromosome. Transcriptional regulator with bimodal DNA-binding specificity. Binds with a higher affinity to methylated CpG dinucleotides in the consensus sequence 5'-CGCG-3' but can also bind to E-box elements (5'-CACGTG-3'). Can also bind specifically to a single methyl-CpG pair. Represses transcription in a methyl-CpG-dependent manner. Plays an important role in regulating DNA replication and common fragile sites (CFS) stability in a RBBP6- and MCM10-dependent manner; represses expression of MCM10 which plays an important role in DNA-replication. Acts as a transcriptional activator. May be involved in the differentiation and/or survival of late postmitotic neurons. This chain is Zinc finger and BTB domain-containing protein 38, found in Homo sapiens (Human).